Here is a 290-residue protein sequence, read N- to C-terminus: Formamidopyrimidine-DNA glycosylase (290 aa).

Catalysis depends on proline 2, which acts as the Schiff-base intermediate with DNA. Residue glutamate 3 is the Proton donor of the active site. The active-site Proton donor; for beta-elimination activity is the lysine 58. DNA-binding residues include histidine 97, arginine 122, and lysine 165. The segment at lysine 250 to arginine 290 adopts an FPG-type; atypical zinc-finger fold. Arginine 280 serves as the catalytic Proton donor; for delta-elimination activity.

This sequence belongs to the FPG family. As to quaternary structure, monomer. Zn(2+) serves as cofactor.

It catalyses the reaction Hydrolysis of DNA containing ring-opened 7-methylguanine residues, releasing 2,6-diamino-4-hydroxy-5-(N-methyl)formamidopyrimidine.. It carries out the reaction 2'-deoxyribonucleotide-(2'-deoxyribose 5'-phosphate)-2'-deoxyribonucleotide-DNA = a 3'-end 2'-deoxyribonucleotide-(2,3-dehydro-2,3-deoxyribose 5'-phosphate)-DNA + a 5'-end 5'-phospho-2'-deoxyribonucleoside-DNA + H(+). In terms of biological role, involved in base excision repair of DNA damaged by oxidation or by mutagenic agents. Acts as a DNA glycosylase that recognizes and removes damaged bases. Has a preference for oxidized purines, such as 7,8-dihydro-8-oxoguanine (8-oxoG). Has AP (apurinic/apyrimidinic) lyase activity and introduces nicks in the DNA strand. Cleaves the DNA backbone by beta-delta elimination to generate a single-strand break at the site of the removed base with both 3'- and 5'-phosphates. The polypeptide is Formamidopyrimidine-DNA glycosylase (Rhodospirillum centenum (strain ATCC 51521 / SW)).